The chain runs to 1363 residues: Vascular endothelial growth factor receptor 3 (1363 aa).

Residues 1 to 24 (MQPGAALNRRLWLCLGLLQGLANG) form the signal peptide. Residues 25 to 775 (YSMTPPTLNI…EGSEDKGSME (751 aa)) lie on the Extracellular side of the membrane. N-linked (GlcNAc...) asparagine glycosylation is found at asparagine 33, asparagine 104, asparagine 166, asparagine 251, asparagine 299, and asparagine 411. 7 consecutive Ig-like C2-type domains span residues 44–118 (GDSL…YIKA), 151–213 (KDSM…WGDQ), 230–326 (YDIQ…TEVI), 331–415 (PFIS…ISLE), 422–552 (PHIH…FYVT), 555–671 (PDGF…KYLS), and 678–764 (PRLT…ASVA). 2 disulfide bridges follow: cysteine 51–cysteine 111 and cysteine 158–cysteine 206. Cysteine 252 and cysteine 310 form a disulfide bridge. 3 disulfide bridges follow: cysteine 445–cysteine 534, cysteine 466–cysteine 486, and cysteine 578–cysteine 653. Asparagine 515, asparagine 527, asparagine 582, asparagine 594, and asparagine 683 each carry an N-linked (GlcNAc...) asparagine glycan. A disulfide bridge connects residues cysteine 699 and cysteine 751. A glycan (N-linked (GlcNAc...) asparagine) is linked at asparagine 758. The helical transmembrane segment at 776–796 (IVILIGTGVIAVFFWVLLLLI) threads the bilayer. The Cytoplasmic segment spans residues 797 to 1363 (FCNMKRPAHA…GSTFFADSNY (567 aa)). A phosphotyrosine; by SRC mark is found at tyrosine 830 and tyrosine 833. Residues 845–1173 (LHLGRVLGHG…DLVEILGDLL (329 aa)) form the Protein kinase domain. ATP is bound by residues 851–859 (LGHGAFGKV) and lysine 879. The active-site Proton acceptor is aspartate 1037. Position 1063 is a phosphotyrosine; by autocatalysis and SRC (tyrosine 1063). Residues tyrosine 1068, tyrosine 1230, tyrosine 1231, and tyrosine 1265 each carry the phosphotyrosine; by autocatalysis modification. The segment covering 1289–1317 (SRHRQEGSFSRKDPGQHMDISRGHPDLQG) has biased composition (basic and acidic residues). The interval 1289 to 1330 (SRHRQEGSFSRKDPGQHMDISRGHPDLQGRRRRPTQGAQGGK) is disordered. Residues tyrosine 1333 and tyrosine 1337 each carry the phosphotyrosine; by autocatalysis and SRC modification. A Phosphotyrosine; by autocatalysis modification is found at tyrosine 1363.

It belongs to the protein kinase superfamily. Tyr protein kinase family. CSF-1/PDGF receptor subfamily. In terms of assembly, interacts with VEGFC and VEGFD. Monomer in the absence of bound VEGFC or VEGFD. Homodimer in the presence of bound VEGFC or VEGFD. Can also form a heterodimer with KDR. Interacts with PTPN14; the interaction is enhanced by stimulation with VEGFC. Interacts with CRK, GRB2, PTK2/FAK1, SHC1, PIK3R1 and PTPN11/SHP-2. Identified in a complex with SRC and ITGB1. Identified in a complex with SRC and ITGB1. Post-translationally, autophosphorylated on tyrosine residues upon ligand binding. Autophosphorylation occurs in trans, i.e. one subunit of the dimeric receptor phosphorylates tyrosine residues on the other subunit. Phosphorylation in response to H(2)O(2) is mediated by a process that requires SRC and PRKCD activity. Phosphorylation at Tyr-1068 is required for autophosphorylation at additional tyrosine residues. Phosphorylation at Tyr-1063 and Tyr-1337 is important for interaction with CRK and subsequent activation of MAPK8. Phosphorylation at Tyr-1230, Tyr-1231 and Tyr-1337 is important for interaction with GRB2 and subsequent activation of the AKT1 and MAPK1/ERK2 and/or MAPK3/ERK1 signaling pathways. In response to endothelial cell adhesion onto collagen, can also be phosphorylated in the absence of FLT4 kinase activity by SRC.

It localises to the cell membrane. The protein localises to the cytoplasm. It is found in the nucleus. The enzyme catalyses L-tyrosyl-[protein] + ATP = O-phospho-L-tyrosyl-[protein] + ADP + H(+). Present in an inactive conformation in the absence of bound ligand. Binding of VEGFC or VEGFD leads to dimerization and activation by autophosphorylation on tyrosine residues. Tyrosine-protein kinase that acts as a cell-surface receptor for VEGFC and VEGFD, and plays an essential role in adult lymphangiogenesis and in the development of the vascular network and the cardiovascular system during embryonic development. Promotes proliferation, survival and migration of endothelial cells, and regulates angiogenic sprouting. Signaling by activated FLT4 leads to enhanced production of VEGFC, and to a lesser degree VEGFA, thereby creating a positive feedback loop that enhances FLT4 signaling. Modulates KDR signaling by forming heterodimers. Mediates activation of the MAPK1/ERK2, MAPK3/ERK1 signaling pathway, of MAPK8 and the JUN signaling pathway, and of the AKT1 signaling pathway. Phosphorylates SHC1. Mediates phosphorylation of PIK3R1, the regulatory subunit of phosphatidylinositol 3-kinase. Promotes phosphorylation of MAPK8 at 'Thr-183' and 'Tyr-185', and of AKT1 at 'Ser-473'. The sequence is that of Vascular endothelial growth factor receptor 3 (Flt4) from Rattus norvegicus (Rat).